The chain runs to 1028 residues: Unconventional myosin-Ic (1028 aa).

M1 is subject to N-acetylmethionine. Residues 12–696 form the Myosin motor domain; sequence GVQDFVLLEN…TLFATEDALE (685 aa). Residues N53, Y61, 104–113, and 157–161 contribute to the ATP site; these read SGESGAGKTE and NDNSS. N6-methyllysine is present on K348. The interval 573–595 is actin-binding; that stretch reads LSKLMEILMSKQPSYVRCIKPND. IQ domains lie at 699–728 and 722–751; these read KHSI…SAVE and MKHS…AVDV. Residues 850–1024 form the TH1 domain; the sequence is KDNYPQSVPR…NGHLSVVAPR (175 aa).

This sequence belongs to the TRAFAC class myosin-kinesin ATPase superfamily. Myosin family. In terms of assembly, interacts (via its IQ motifs) with calmodulin. In terms of tissue distribution, expressed in brain and the sacculus of the internal ear.

The protein resides in the cytoplasm. Its subcellular location is the cell membrane. It localises to the cell projection. The protein localises to the ruffle membrane. It is found in the cytoplasmic vesicle. The protein resides in the stereocilium membrane. Its function is as follows. Myosins are actin-based motor molecules with ATPase activity. Unconventional myosins serve in intracellular movements. Their highly divergent tails are presumed to bind to membranous compartments, which would be moved relative to actin filaments. The chain is Unconventional myosin-Ic (Myo1c) from Aquarana catesbeiana (American bullfrog).